A 95-amino-acid polypeptide reads, in one-letter code: Opiscorpine-2 (95 aa).

An N-terminal signal peptide occupies residues 1 to 19; the sequence is MNNKLTALIFHGLLAIASC. Positions 55–95 constitute a BetaSPN-type CS-alpha/beta domain; that stretch reads EFMCMANMDPTGSCETHCQKASGEKGYCHGTKCKCGVPLSY. 3 cysteine pairs are disulfide-bonded: Cys-58/Cys-82, Cys-68/Cys-87, and Cys-72/Cys-89.

The protein belongs to the long chain scorpion toxin family. Class 3 subfamily. In terms of tissue distribution, expressed by the venom gland.

It is found in the secreted. Has antimicrobial activity against yeasts and bacteria. The protein is Opiscorpine-2 of Opistophthalmus carinatus (African yellow leg scorpion).